A 591-amino-acid polypeptide reads, in one-letter code: Paxillin (591 aa).

N-acetylmethionine is present on Met-1. N-acetylserine is present on Asp-2. The LD motif 1 signature appears at 3-15 (DLDALLADLESTT). The segment at 17-138 (HISKRPVFLS…PSPTVMSTSL (122 aa)) is disordered. Tyr-31 is modified (phosphotyrosine; by PTK6). Pro residues predominate over residues 45–54 (VPPPVPPPPS). A compositionally biased stretch (polar residues) spans 69-106 (WQPSSSRFIHQQPQSSSPVYGSSAKTSSVSNPQDSVGS). Residues Ser-83 and Ser-85 each carry the phosphoserine modification. Residue Tyr-88 is modified to Phosphotyrosine. Ser-106 is subject to Phosphoserine. At Tyr-118 the chain carries Phosphotyrosine; by PTK6. Ser-119, Ser-126, and Ser-130 each carry phosphoserine. Positions 121-137 (PNKQKSAEPSPTVMSTS) are enriched in polar residues. Thr-132 carries the post-translational modification Phosphothreonine. A phosphoserine mark is found at Ser-137, Ser-140, and Ser-143. The short motif at 144–156 (ELDRLLLELNAVQ) is the LD motif 2 element. Residues 159-260 (PPGFPADEAN…TQQQTRISAS (102 aa)) are disordered. Tyr-181 is modified (phosphotyrosine). The LD motif 3 motif lies at 216-228 (SVESLLDELESSV). Ser-230 is subject to Phosphoserine. Positions 236 to 260 (TVNQGEMSSPQRVTSTQQQTRISAS) are enriched in polar residues. Position 244 is a phosphoserine; by CDK5 (Ser-244). The residue at position 250 (Ser-250) is a Phosphoserine; by SLK. Phosphoserine is present on residues Ser-258, Ser-261, Ser-272, Ser-303, Ser-322, Ser-332, and Ser-340. A required for binding to PARVA and ILK region spans residues 262–315 (ATRELDELMASLSDFKIQGLEQRADGERCWAAGWPRDGGRSSPGGQDEGGFMAQ). An LD motif 4 motif is present at residues 265–276 (ELDELMASLSDF). Positions 291 to 335 (WAAGWPRDGGRSSPGGQDEGGFMAQGKTGSSSPPGGPPKPGSQLD) are disordered. Residues 333–345 (QLDSMLGSLQSDL) carry the LD motif 5 motif. LIM zinc-binding domains are found at residues 356 to 415 (GVCG…LFSP), 416 to 473 (RCYY…DMFA), 474 to 533 (PKCG…RRGS), and 534 to 591 (LCSG…KLFC). Ser-533 is subject to Phosphoserine.

The protein belongs to the paxillin family. Interacts in vitro with VCL/vinculin as well as to the SH3 domain of SRC and, when tyrosine phosphorylated, to the SH2 domain of CRK. Interacts with GIT1. Interacts with NUDT16L1/SDOS. Interacts with PTK2/FAK1. Interacts with PTK2B/PYK2. Interacts with ASAP2. Interacts with unphosphorylated ITGA4. Interacts with RNF5. Interacts with PDCD10. Interacts with NEK3, the interaction is prolactin-dependent. Interacts with PTK6. Interacts with TGFB1I1. Interacts with SORBS1. Interacts with PARVB. Interacts (via LD motif 4) with PARVA/PARVIN. Interacts (via LD motif 4) with ILK. Interacts (via cytoplasmic domain) with CEACAM1; the interaction is phosphotyrosyl-dependent. Interacts with LIMA1; this complex stabilizes actin dynamics. Interacts with CD36 (via C-terminus). Interacts with TRIM15. Interacts with PAK4; PAK4 acts as a scaffold to suppport PAXI phosphorylation at Ser-272. As to quaternary structure, interacts strongly with PTK2/FAK1 and weakly with VCL/vinculin. In terms of assembly, interacts strongly with VCL/vinculin but only weakly with PTK2/FAK1. Phosphorylated by MAPK1/ERK2. Phosphorylated on tyrosine residues during integrin-mediated cell adhesion, embryonic development, fibroblast transformation and following stimulation of cells by mitogens. Phosphorylation at Ser-244 by CDK5 reduces its interaction with PTK2/FAK1 in matrix-cell focal adhesions (MCFA) during oligodendrocytes (OLs) differentiation. Phosphorylation at Tyr-31 and Tyr-118 by PTK6 promote the activation of RAC1 via CRK/CrKII, thereby promoting migration and invasion. Phosphorylation at Ser-250 by SLK is required for PXN redistribution and cell motility. Phosphorylation at Ser-272 promotes focal adhesion disassembly during cell migration.

It is found in the cytoplasm. The protein localises to the cytoskeleton. The protein resides in the cell junction. It localises to the focal adhesion. Its subcellular location is the cell cortex. In terms of biological role, cytoskeletal protein involved in actin-membrane attachment at sites of cell adhesion to the extracellular matrix (focal adhesion). Recruits other proteins such as TRIM15 to focal adhesion. In Homo sapiens (Human), this protein is Paxillin.